Here is a 487-residue protein sequence, read N- to C-terminus: MESEAAATVQATRPRRAPRTPVTAILTDKRRRKPKSNNESQLPFLLQQSQKATVDDTYSQWKTLLPILYDSFVNHTLVWPSLSCRWGPQLEQAGSKTQRLYLSEQTNGSVPNTLVIANCETVNRQLNEKAHSPFVKKYKTIIHPGEVNRIRELPQNSKIVATHTDSPDILIWNTETQPDRYAVLGAPDSRPDLLLIGHQDDAEFALAMCPTEPFVLSGGKDKSVILWNIQDHITMAGSDSKSPGSSFKQTGEGSDKTGGPSVGPRGIYNGHKDTVEDVAFCPSSAQEFCSVGDDSCLMLWDARTGTSPAMKVEKAHDADLHCVDWNPHDNNLILTGSADNTVRVFDRRNLTSNGVGSPVYKFEGHRAAVLCVQWSPDKSSVFGSSAEDGLLNIWDCDRVGKKSERATKTPDGLFFQHAGHRDKVVDFHWSLLNPWTIVSVSDNCESIGGGGTLQIWRMSDLIYRPEDEVLTELEKFKSHVFTCTSKS.

M1 carries the N-acetylmethionine modification. Over residues 1–12 (MESEAAATVQAT) the composition is skewed to low complexity. The tract at residues 1-44 (MESEAAATVQATRPRRAPRTPVTAILTDKRRRKPKSNNESQLPF) is disordered. Positions 14-21 (PRRAPRTP) match the Nuclear localization signal motif. WD repeat units follow at residues 142–182 (IHPG…DRYA), 197–237 (GHQD…TMAG), 270–310 (GHKD…SPAM), 315–355 (AHDA…SNGV), 364–404 (GHRA…KKSE), and 419–466 (GHRD…YRPE). Residues 236 to 268 (AGSDSKSPGSSFKQTGEGSDKTGGPSVGPRGIY) form a disordered region. Positions 237 to 252 (GSDSKSPGSSFKQTGE) are enriched in polar residues. The DWD box signature appears at 288–303 (FCSVGDDSCLMLWDAR).

It belongs to the WD repeat RBAP46/RBAP48/MSI1 family. In terms of assembly, interacts with AHL16. Interacts with LHP1, PDP2, PDP3 and PDP6. Component of the PRC2 (polycomb repressive complex 2) complex which regulates histone methylation on histone H3K27.

It is found in the nucleus. Core histone-binding subunit that may target chromatin assembly factors, chromatin remodeling factors and histone deacetylases to their histone substrates in a manner that is regulated by nucleosomal DNA. Acts together with PDP1 and MSI4/FVE to regulate the function of the PRC2 complex on FLC. The chain is WD-40 repeat-containing protein MSI5 from Arabidopsis thaliana (Mouse-ear cress).